The sequence spans 198 residues: Ribonuclease HII (198 aa).

The 196-residue stretch at 3–198 folds into the RNase H type-2 domain; the sequence is FLEGGVDEAG…SWRTLRGESP (196 aa). A divalent metal cation-binding residues include Asp9, Glu10, and Asp104.

Belongs to the RNase HII family. The cofactor is Mn(2+). Requires Mg(2+) as cofactor.

It localises to the cytoplasm. The enzyme catalyses Endonucleolytic cleavage to 5'-phosphomonoester.. In terms of biological role, endonuclease that specifically degrades the RNA of RNA-DNA hybrids. This Pyrobaculum neutrophilum (strain DSM 2338 / JCM 9278 / NBRC 100436 / V24Sta) (Thermoproteus neutrophilus) protein is Ribonuclease HII.